A 200-amino-acid chain; its full sequence is UPF0301 protein Veis_1517 (200 aa).

The protein belongs to the UPF0301 (AlgH) family.

This is UPF0301 protein Veis_1517 from Verminephrobacter eiseniae (strain EF01-2).